The following is a 252-amino-acid chain: Gastrula zinc finger protein XlCGF28.1 (252 aa).

9 C2H2-type zinc fingers span residues 6–28 (FTCN…LRSH), 34–56 (FTCS…FRGH), 62–84 (SACT…IRSH), 90–112 (YTCT…VRSH), 118–140 (FKCT…LRFH), 146–168 (TTCS…FRVH), 174–196 (FTCT…SYLH), 202–224 (YTCT…SYLH), and 230–252 (FTCT…SHTH).

It belongs to the krueppel C2H2-type zinc-finger protein family.

It is found in the nucleus. May be involved in transcriptional regulation. The sequence is that of Gastrula zinc finger protein XlCGF28.1 from Xenopus laevis (African clawed frog).